We begin with the raw amino-acid sequence, 629 residues long: tRNA uridine 5-carboxymethylaminomethyl modification enzyme MnmG (629 aa).

13–18 (GGGHAG) contributes to the FAD binding site. An NAD(+)-binding site is contributed by 273–287 (GPRYCPSIEDKITRF).

This sequence belongs to the MnmG family. As to quaternary structure, homodimer. Heterotetramer of two MnmE and two MnmG subunits. FAD serves as cofactor.

The protein localises to the cytoplasm. Its function is as follows. NAD-binding protein involved in the addition of a carboxymethylaminomethyl (cmnm) group at the wobble position (U34) of certain tRNAs, forming tRNA-cmnm(5)s(2)U34. The protein is tRNA uridine 5-carboxymethylaminomethyl modification enzyme MnmG of Aeromonas salmonicida (strain A449).